The chain runs to 444 residues: MEKLLSLYQEHIKTLQNRTRDALSRHHLDNVLIHSGEPIGVFLDDSDYPFKVNAHFKAWVPVTDVPHCWLLVDGVNKPKFWFYSPVDYWHSVEALPSSYWTHEIELIHLKNVDDIQKELAPFINKNTAYIGPNTQRADSLGVSLDNVNNQSLLNYYHYYRAYKTGYELACMREAQKMAVNGHIAAREAFQAELSEFDINMAYLMATGHRDTDVPYGNIVALNEHAAVLHYTKLDHQSPDEYRSFLIDAGAEYNGYAADITRTYSAKENHEFTALVKDMNDAQQALIATMKAGVRYSEYHIQMHQRIAGLLHKYGIVKGISEEEMVSEGLTTPFLPHGLGHALGLQVHDAGGFMQDDKGTHLAAPAMYPFLRCTRIVEPGMVLTIEPGFYFIDSLLAPWREGKYRSHFDWHLIEHFKPFGGIRIEDNIIIHDNKIENMTRDLHLA.

Mn(2+)-binding residues include aspartate 247, aspartate 258, histidine 340, glutamate 385, and glutamate 424.

The protein belongs to the peptidase M24B family. Bacterial-type prolidase subfamily. Mn(2+) serves as cofactor.

The catalysed reaction is Xaa-L-Pro dipeptide + H2O = an L-alpha-amino acid + L-proline. Its function is as follows. Splits dipeptides with a prolyl residue in the C-terminal position. In Proteus mirabilis (strain HI4320), this protein is Xaa-Pro dipeptidase.